We begin with the raw amino-acid sequence, 494 residues long: Aspartyl/glutamyl-tRNA(Asn/Gln) amidotransferase subunit B (494 aa).

The protein belongs to the GatB/GatE family. GatB subfamily. Heterotrimer of A, B and C subunits.

The catalysed reaction is L-glutamyl-tRNA(Gln) + L-glutamine + ATP + H2O = L-glutaminyl-tRNA(Gln) + L-glutamate + ADP + phosphate + H(+). It catalyses the reaction L-aspartyl-tRNA(Asn) + L-glutamine + ATP + H2O = L-asparaginyl-tRNA(Asn) + L-glutamate + ADP + phosphate + 2 H(+). In terms of biological role, allows the formation of correctly charged Asn-tRNA(Asn) or Gln-tRNA(Gln) through the transamidation of misacylated Asp-tRNA(Asn) or Glu-tRNA(Gln) in organisms which lack either or both of asparaginyl-tRNA or glutaminyl-tRNA synthetases. The reaction takes place in the presence of glutamine and ATP through an activated phospho-Asp-tRNA(Asn) or phospho-Glu-tRNA(Gln). This Rhodopseudomonas palustris (strain BisB18) protein is Aspartyl/glutamyl-tRNA(Asn/Gln) amidotransferase subunit B.